A 479-amino-acid chain; its full sequence is Sulfate adenylyltransferase subunit 1 (479 aa).

One can recognise a tr-type G domain in the interval 25-239; the sequence is KSLLRFLTCG…EVLETVDIQR (215 aa). The interval 34–41 is G1; the sequence is GSVDDGKS. Residue 34–41 participates in GTP binding; it reads GSVDDGKS. The interval 92-96 is G2; it reads GITID. Positions 113–116 are G3; sequence DTPG. Residues 113 to 117 and 168 to 171 contribute to the GTP site; these read DTPGH and NKMD. Positions 168 to 171 are G4; it reads NKMD. Positions 206-208 are G5; it reads SAL.

Belongs to the TRAFAC class translation factor GTPase superfamily. Classic translation factor GTPase family. CysN/NodQ subfamily. In terms of assembly, heterodimer composed of CysD, the smaller subunit, and CysN.

The catalysed reaction is sulfate + ATP + H(+) = adenosine 5'-phosphosulfate + diphosphate. Its pathway is sulfur metabolism; hydrogen sulfide biosynthesis; sulfite from sulfate: step 1/3. In terms of biological role, with CysD forms the ATP sulfurylase (ATPS) that catalyzes the adenylation of sulfate producing adenosine 5'-phosphosulfate (APS) and diphosphate, the first enzymatic step in sulfur assimilation pathway. APS synthesis involves the formation of a high-energy phosphoric-sulfuric acid anhydride bond driven by GTP hydrolysis by CysN coupled to ATP hydrolysis by CysD. This is Sulfate adenylyltransferase subunit 1 from Salmonella typhimurium (strain LT2 / SGSC1412 / ATCC 700720).